The primary structure comprises 162 residues: Ribosome maturation factor RimP (162 aa).

It belongs to the RimP family.

Its subcellular location is the cytoplasm. In terms of biological role, required for maturation of 30S ribosomal subunits. The sequence is that of Ribosome maturation factor RimP from Beutenbergia cavernae (strain ATCC BAA-8 / DSM 12333 / CCUG 43141 / JCM 11478 / NBRC 16432 / NCIMB 13614 / HKI 0122).